The following is a 727-amino-acid chain: ABC transporter G family member STR2 (727 aa).

Residues methionine 1 to glutamate 475 are Cytoplasmic-facing. The ABC transporter domain occupies leucine 25–lysine 275. ATP is bound at residue glycine 69–serine 76. The helical transmembrane segment at leucine 476–histidine 496 threads the bilayer. Topologically, residues asparagine 497 to serine 510 are extracellular. The chain crosses the membrane as a helical span at residues phenylalanine 511–isoleucine 531. Over glutamine 532–histidine 559 the chain is Cytoplasmic. A helical membrane pass occupies residues methionine 560–leucine 580. Over arginine 581–proline 583 the chain is Extracellular. Residues phenylalanine 584–phenylalanine 604 form a helical membrane-spanning segment. The Cytoplasmic segment spans residues valine 605 to tyrosine 612. Residues isoleucine 613–phenylalanine 633 traverse the membrane as a helical segment. Over leucine 634 to asparagine 699 the chain is Extracellular. N-linked (GlcNAc...) asparagine glycosylation is present at asparagine 667. The helical transmembrane segment at valine 700–phenylalanine 720 threads the bilayer. Residues alanine 721–serine 727 are Cytoplasmic-facing.

The protein belongs to the ABC transporter superfamily. ABCG family. Stunted arbuscule (STR) subfamily. Heterodimerizes with STR; the resulting transporter is located in the peri-arbuscular membrane. Expressed constitutively in the vascular tissue of roots.

The protein resides in the cell membrane. Functionally, together with STR, required for arbuscule development in arbuscular mycorrhizal symbiosis. In Medicago truncatula (Barrel medic), this protein is ABC transporter G family member STR2.